Here is a 211-residue protein sequence, read N- to C-terminus: tRNA (guanine-N(7)-)-methyltransferase (211 aa).

E43, E68, D95, and D117 together coordinate S-adenosyl-L-methionine. The active site involves D117. Substrate contacts are provided by residues K121, D153, and 190–193; that span reads TEYE.

It belongs to the class I-like SAM-binding methyltransferase superfamily. TrmB family.

It carries out the reaction guanosine(46) in tRNA + S-adenosyl-L-methionine = N(7)-methylguanosine(46) in tRNA + S-adenosyl-L-homocysteine. It participates in tRNA modification; N(7)-methylguanine-tRNA biosynthesis. Catalyzes the formation of N(7)-methylguanine at position 46 (m7G46) in tRNA. In Staphylococcus saprophyticus subsp. saprophyticus (strain ATCC 15305 / DSM 20229 / NCIMB 8711 / NCTC 7292 / S-41), this protein is tRNA (guanine-N(7)-)-methyltransferase.